Reading from the N-terminus, the 206-residue chain is Methyl-coenzyme M reductase operon protein C (206 aa).

In terms of assembly, MCR is composed of three subunits: alpha, beta, and gamma. The function of proteins C and D is not known.

The protein is Methyl-coenzyme M reductase operon protein C (mcrC) of Methanosarcina barkeri (strain Fusaro / DSM 804).